The following is a 584-amino-acid chain: NADPH-dependent diflavin oxidoreductase 1 (584 aa).

Positions 6–150 (IYILYGSETG…VFAYWCNHLY (145 aa)) constitute a Flavodoxin-like domain. FMN-binding positions include 12-17 (SETGTA), 59-62 (STTG), 97-106 (CGDTSYTRFN), and Glu132. An FAD-binding FR-type domain is found at 199 to 436 (RGKIEATLVH…LPGFLNLSYQ (238 aa)). FAD-binding positions include Arg343, 373-376 (RQYS), and 407-410 (GICS). Residues Thr448, 503 to 504 (SR), and 509 to 513 (KKYVQ) each bind NADP(+). Residue Trp584 participates in FAD binding.

The protein belongs to the NADPH-dependent diflavin oxidoreductase NDOR1 family. It in the N-terminal section; belongs to the flavodoxin family. This sequence in the C-terminal section; belongs to the flavoprotein pyridine nucleotide cytochrome reductase family. Interacts with dre2; as part of the cytosolic iron-sulfur (Fe-S) protein assembly (CIA) machinery. Requires FAD as cofactor. The cofactor is FMN.

Its subcellular location is the cytoplasm. It is found in the mitochondrion. The catalysed reaction is 2 oxidized [2Fe-2S]-[protein] + NADPH = 2 reduced [2Fe-2S]-[protein] + NADP(+) + H(+). NADPH-dependent reductase which is a central component of the cytosolic iron-sulfur (Fe-S) protein assembly (CIA) machinery. Transfers electrons from NADPH via its FAD and FMN prosthetic groups to the [2Fe-2S] cluster of dre2, another key component of the CIA machinery. In turn, this reduced cluster provides electrons for assembly of cytosolic iron-sulfur cluster proteins. Positively controls H(2)O(2)-induced cell death. The protein is NADPH-dependent diflavin oxidoreductase 1 of Schizosaccharomyces pombe (strain 972 / ATCC 24843) (Fission yeast).